The chain runs to 181 residues: Interleukin-24 (181 aa).

A signal peptide spans 1–26; sequence MSWGLQILPCLSLILLLWNQVPGLEG. Cysteine 34 and cysteine 81 are disulfide-bonded. An N-linked (GlcNAc...) asparagine glycan is attached at asparagine 74. Residue lysine 97 forms a Glycyl lysine isopeptide (Lys-Gly) (interchain with G-Cter in ubiquitin) linkage.

It belongs to the IL-10 family. Post-translationally, glycosylated. In terms of processing, ubiquitination at Lys-97 promotes proteasomal degradation. In terms of tissue distribution, selectively expressed by Th2 cells. Expressed in the liver.

Its subcellular location is the secreted. Its function is as follows. Multifunctional cytokine mainly produced by T-cells that plays a regulatory role in immune response, tissue homeostasis, host defense, and oncogenesis. Possesses antiviral functions and induces the type I interferon response during influenza infection. Signals through two receptor complexes IL20RA/IL20RB or IL20RB/IL22RA1. In turn, stimulates the JAK1-STAT3 and MAPK pathways and promotes the secretion of pro-inflammatory mediators including IL8 and MMP1. Intracellularly, maintains endoplasmic reticulum homeostasis by restricting the eIF2alpha-CHOP pathway-mediated stress signal. In addition, acts as a quality control mechanism for the ubiquitin proteasome system by alerting the cell to proteasome dysfunction through activation of PKR/EIF2AK2. The sequence is that of Interleukin-24 (Il24) from Mus musculus (Mouse).